The following is a 277-amino-acid chain: Tryptophan synthase alpha chain (277 aa).

Active-site proton acceptor residues include glutamate 59 and aspartate 70.

The protein belongs to the TrpA family. In terms of assembly, tetramer of two alpha and two beta chains.

It catalyses the reaction (1S,2R)-1-C-(indol-3-yl)glycerol 3-phosphate + L-serine = D-glyceraldehyde 3-phosphate + L-tryptophan + H2O. It functions in the pathway amino-acid biosynthesis; L-tryptophan biosynthesis; L-tryptophan from chorismate: step 5/5. The alpha subunit is responsible for the aldol cleavage of indoleglycerol phosphate to indole and glyceraldehyde 3-phosphate. This Streptomyces avermitilis (strain ATCC 31267 / DSM 46492 / JCM 5070 / NBRC 14893 / NCIMB 12804 / NRRL 8165 / MA-4680) protein is Tryptophan synthase alpha chain.